The sequence spans 306 residues: Tyrosine recombinase XerC (306 aa).

Positions A2–V81 constitute a Core-binding (CB) domain. The Tyr recombinase domain maps to P102–N283. Active-site residues include R146, K170, H235, R238, and H261. Y270 (O-(3'-phospho-DNA)-tyrosine intermediate) is an active-site residue.

The protein belongs to the 'phage' integrase family. XerC subfamily. As to quaternary structure, forms a cyclic heterotetrameric complex composed of two molecules of XerC and two molecules of XerD.

Its subcellular location is the cytoplasm. Site-specific tyrosine recombinase, which acts by catalyzing the cutting and rejoining of the recombining DNA molecules. The XerC-XerD complex is essential to convert dimers of the bacterial chromosome into monomers to permit their segregation at cell division. It also contributes to the segregational stability of plasmids. The sequence is that of Tyrosine recombinase XerC from Erythrobacter litoralis (strain HTCC2594).